Consider the following 233-residue polypeptide: Mediator of RNA polymerase II transcription subunit 8 (233 aa).

The tract at residues R204–D233 is disordered. Residues G210 to Q223 show a composition bias toward polar residues. A compositionally biased stretch (basic and acidic residues) spans S224–D233.

It belongs to the Mediator complex subunit 8 family. Component of the Mediator complex.

It is found in the nucleus. Its function is as follows. Component of the Mediator complex, a coactivator involved in the regulated transcription of nearly all RNA polymerase II-dependent genes. Mediator functions as a bridge to convey information from gene-specific regulatory proteins to the basal RNA polymerase II transcription machinery. Mediator is recruited to promoters by direct interactions with regulatory proteins and serves as a scaffold for the assembly of a functional preinitiation complex with RNA polymerase II and the general transcription factors. This is Mediator of RNA polymerase II transcription subunit 8 (MED8) from Candida glabrata (strain ATCC 2001 / BCRC 20586 / JCM 3761 / NBRC 0622 / NRRL Y-65 / CBS 138) (Yeast).